The sequence spans 202 residues: Orotate phosphoribosyltransferase (202 aa).

Residues K93 and 113–121 (EDIITTGGS) contribute to the 5-phospho-alpha-D-ribose 1-diphosphate site. Orotate contacts are provided by T117 and R145.

Belongs to the purine/pyrimidine phosphoribosyltransferase family. PyrE subfamily. Homodimer. Requires Mg(2+) as cofactor.

The enzyme catalyses orotidine 5'-phosphate + diphosphate = orotate + 5-phospho-alpha-D-ribose 1-diphosphate. It participates in pyrimidine metabolism; UMP biosynthesis via de novo pathway; UMP from orotate: step 1/2. Functionally, catalyzes the transfer of a ribosyl phosphate group from 5-phosphoribose 1-diphosphate to orotate, leading to the formation of orotidine monophosphate (OMP). This Campylobacter fetus subsp. fetus (strain 82-40) protein is Orotate phosphoribosyltransferase.